Reading from the N-terminus, the 219-residue chain is Kappa-scoloptoxin(11)-Ss1a (219 aa).

A signal peptide spans 1–16 (MFYSHLLFFTFTFACS). The propeptide occupies 17 to 25 (SSLNRKTKR).

Contains 8 disulfide bonds. As to expression, expressed by the venom gland.

Its subcellular location is the secreted. Its function is as follows. Voltage-gated potassium channel inhibitor. This Scolopendra dehaani (Thai centipede) protein is Kappa-scoloptoxin(11)-Ss1a.